The chain runs to 82 residues: Cytochrome b559 subunit alpha (82 aa).

The chain crosses the membrane as a helical span at residues 21–35; sequence VIHSITVPALFIAGW. A heme-binding site is contributed by H23.

The protein belongs to the PsbE/PsbF family. As to quaternary structure, heterodimer of an alpha subunit and a beta subunit. PSII is composed of 1 copy each of membrane proteins PsbA, PsbB, PsbC, PsbD, PsbE, PsbF, PsbH, PsbI, PsbJ, PsbK, PsbL, PsbM, PsbT, PsbX, PsbY, PsbZ, Psb30/Ycf12, at least 3 peripheral proteins of the oxygen-evolving complex and a large number of cofactors. It forms dimeric complexes. The cofactor is heme b.

It is found in the plastid. The protein resides in the chloroplast thylakoid membrane. Its function is as follows. This b-type cytochrome is tightly associated with the reaction center of photosystem II (PSII). PSII is a light-driven water:plastoquinone oxidoreductase that uses light energy to abstract electrons from H(2)O, generating O(2) and a proton gradient subsequently used for ATP formation. It consists of a core antenna complex that captures photons, and an electron transfer chain that converts photonic excitation into a charge separation. The sequence is that of Cytochrome b559 subunit alpha from Chlamydomonas reinhardtii (Chlamydomonas smithii).